Here is a 186-residue protein sequence, read N- to C-terminus: UPF0301 protein Swit_2673 (186 aa).

It belongs to the UPF0301 (AlgH) family.

The chain is UPF0301 protein Swit_2673 from Rhizorhabdus wittichii (strain DSM 6014 / CCUG 31198 / JCM 15750 / NBRC 105917 / EY 4224 / RW1) (Sphingomonas wittichii).